The primary structure comprises 177 residues: Thymidine kinase (177 aa).

11–18 provides a ligand contact to ATP; it reads GPMFSGKS. The active-site Proton acceptor is the E83. Position 113 (F113) interacts with substrate. Zn(2+) contacts are provided by C138 and C141. Residue 157–161 coordinates substrate; that stretch reads IEIIG. Residues C170 and C173 each coordinate Zn(2+).

It belongs to the thymidine kinase family. In terms of assembly, homotetramer. Two molecules of substrate bind to each enzyme tetramer.

It carries out the reaction thymidine + ATP = dTMP + ADP + H(+). In terms of biological role, phosphorylates thymidine and thymidine analogs, such as azidothymidine (AZT). Part of the salvage pathway for pyrimidine deoxyribonucleotide synthesis. In Variola virus (isolate Human/India/Ind3/1967) (VARV), this protein is Thymidine kinase (OPG101).